Consider the following 145-residue polypeptide: Transcriptional regulator MraZ (145 aa).

SpoVT-AbrB domains follow at residues threonine 5–glutamate 49 and threonine 78–valine 121.

The protein belongs to the MraZ family. As to quaternary structure, forms oligomers.

It is found in the cytoplasm. The protein localises to the nucleoid. The sequence is that of Transcriptional regulator MraZ from Ureaplasma parvum serovar 3 (strain ATCC 27815 / 27 / NCTC 11736).